The sequence spans 1034 residues: MSAYAELHCLSNFSFQRGASSAAELFQRAKALGYQALAITDECTLAGIVRAWQASRDTGLKLIVGSEMQVEDGPRLVLLVEDLAGYQGLCRLITRARRRAEKGSYRLLREDFAEPLPGLLALWLTGAGEPLAQGRWLQQVFPQRLWLALELHCGQDDARHLQQQLALARQLGLPAVACGDVHMHVRGRRALQDTMTAIRHHLPVAEAGQRLFANGERHLRPVEVLQGLYPQALLDESLAIAGRCAFDLGQLRYQYPRELVPEGHDAGSWLRVLTQRGIVRRWPTGARAEVLKQIDKELTLICDLGYESYFLTVHDIVDFARRQHILCQGRGSAANSVVCFALGITEIDPDRSTLLFERFLSRERNEPPDIDVDFEHERREEVLQYLFQRYGRHRAALTAVVSTYHGAGAVRDVAKALGLPPDQVNALADCCGHWSDTPPSVERLQEAGFDPQSPVLRRVLSLTGQLIGFPRHLSQHPGGFVISEQPLDHLVPVENATMAERTVIQWDKDDLDMVGLLKVDILALGMLSAIRRCFDLIHGYRGQRYSLASIPPEDPATYEMIGRADTIGVFQIESRAQMSMLPRLKPQNFYDLVIEVAIVRPGPIQGGMVHPYLRRRNRQEPETYPSPELEGVLKRTLGVPLFQEQVMQIAIVAADYTPGEADQLRRSMAAWKRHGGLEPHRERLRRGMNRNGYSDEFATQIFEQIKGFGSYGFPESHAASFALLTYASCWLKCHEPAAFACALINSWPMGFYSPDQILQDARRHGLQVLAVDVGASDWDCSLEPIPVQPARAGNGPPGQPALRLGLRMIKGFREDDARRIERARRQRAFVDIADLGERARLDVRAQELLADAGALQALAGDRYRARWEVAGVERQLGLFAGLPSQEEAPVALPRPSVGEDLQADYHSLGTTLGPHPLALLRPQLAARRCRSSRDLLAVEHGRSVSVAGLVTGRQRPGTASGVTFVTLEDEFGNVNVVVWRDLAERQRRVLVGAQLLKVDGTLETEGEVRHLIAGRLSDLSPLLDGIHVRSRDFR.

The protein belongs to the DNA polymerase type-C family. DnaE2 subfamily.

It localises to the cytoplasm. It catalyses the reaction DNA(n) + a 2'-deoxyribonucleoside 5'-triphosphate = DNA(n+1) + diphosphate. Its function is as follows. DNA polymerase involved in damage-induced mutagenesis and translesion synthesis (TLS). It is not the major replicative DNA polymerase. This chain is Error-prone DNA polymerase, found in Pseudomonas fluorescens (strain ATCC BAA-477 / NRRL B-23932 / Pf-5).